The following is a 187-amino-acid chain: Decorin-binding protein B (187 aa).

The signal sequence occupies residues 1 to 20 (MKIGKLNSIVIALFFKLLVA).

This sequence belongs to the decorin-binding protein family.

Binds to decorin which may mediate the adherence of B.burgdorferi to collagen fibers in skin and other tissues. This is Decorin-binding protein B (dbpB) from Borreliella burgdorferi (strain ATCC 35210 / DSM 4680 / CIP 102532 / B31) (Borrelia burgdorferi).